Consider the following 355-residue polypeptide: 3-dehydroquinate synthase (355 aa).

Residues 105-109, 129-130, Lys-142, Lys-151, and 169-172 each bind NAD(+); these read GVVGD, TS, and TLKT. Zn(2+) contacts are provided by Glu-184, His-246, and His-263.

The protein belongs to the sugar phosphate cyclases superfamily. Dehydroquinate synthase family. Co(2+) serves as cofactor. The cofactor is Zn(2+). It depends on NAD(+) as a cofactor.

The protein localises to the cytoplasm. The catalysed reaction is 7-phospho-2-dehydro-3-deoxy-D-arabino-heptonate = 3-dehydroquinate + phosphate. It participates in metabolic intermediate biosynthesis; chorismate biosynthesis; chorismate from D-erythrose 4-phosphate and phosphoenolpyruvate: step 2/7. Catalyzes the conversion of 3-deoxy-D-arabino-heptulosonate 7-phosphate (DAHP) to dehydroquinate (DHQ). The sequence is that of 3-dehydroquinate synthase from Streptococcus agalactiae serotype Ia (strain ATCC 27591 / A909 / CDC SS700).